The following is a 537-amino-acid chain: Glutamyl-tRNA reductase, chloroplastic (537 aa).

A chloroplast-targeting transit peptide spans 1–48 (MMASTTSATAAGGAFAAAKTRAGSSAAGGGACARVAAGGRRRSGVVVR). Residues 134 to 137 (TCNR), Ser194, 199 to 201 (EGQ), and Gln205 contribute to the substrate site. The Nucleophile role is filled by Cys135. NADP(+) is bound at residue 276 to 281 (GAGKMG).

Belongs to the glutamyl-tRNA reductase family.

Its subcellular location is the plastid. It localises to the chloroplast. It catalyses the reaction (S)-4-amino-5-oxopentanoate + tRNA(Glu) + NADP(+) = L-glutamyl-tRNA(Glu) + NADPH + H(+). The protein operates within porphyrin-containing compound metabolism; protoporphyrin-IX biosynthesis; 5-aminolevulinate from L-glutamyl-tRNA(Glu): step 1/2. Catalyzes the NADPH-dependent reduction of glutamyl-tRNA(Glu) to glutamate 1-semialdehyde (GSA). In Oryza sativa subsp. indica (Rice), this protein is Glutamyl-tRNA reductase, chloroplastic.